Consider the following 59-residue polypeptide: UPF0339 protein CC_2965 (59 aa).

It belongs to the UPF0339 family.

In Caulobacter vibrioides (strain ATCC 19089 / CIP 103742 / CB 15) (Caulobacter crescentus), this protein is UPF0339 protein CC_2965.